The following is a 73-amino-acid chain: Translation initiation factor IF-1 (73 aa).

The 73-residue stretch at 1 to 73 (MPKKDGAIEI…SRGRIVYRYK (73 aa)) folds into the S1-like domain.

The protein belongs to the IF-1 family. Component of the 30S ribosomal translation pre-initiation complex which assembles on the 30S ribosome in the order IF-2 and IF-3, IF-1 and N-formylmethionyl-tRNA(fMet); mRNA recruitment can occur at any time during PIC assembly.

The protein resides in the cytoplasm. One of the essential components for the initiation of protein synthesis. Stabilizes the binding of IF-2 and IF-3 on the 30S subunit to which N-formylmethionyl-tRNA(fMet) subsequently binds. Helps modulate mRNA selection, yielding the 30S pre-initiation complex (PIC). Upon addition of the 50S ribosomal subunit IF-1, IF-2 and IF-3 are released leaving the mature 70S translation initiation complex. The protein is Translation initiation factor IF-1 of Frankia alni (strain DSM 45986 / CECT 9034 / ACN14a).